Here is a 278-residue protein sequence, read N- to C-terminus: Orotidine 5'-phosphate decarboxylase (278 aa).

Residues D40, 62 to 64 (KTH), 93 to 102 (DRKFADIGNT), Y223, and R242 contribute to the substrate site. K95 functions as the Proton donor in the catalytic mechanism.

Belongs to the OMP decarboxylase family.

The catalysed reaction is orotidine 5'-phosphate + H(+) = UMP + CO2. It participates in pyrimidine metabolism; UMP biosynthesis via de novo pathway; UMP from orotate: step 2/2. This Schizophyllum commune (Split gill fungus) protein is Orotidine 5'-phosphate decarboxylase (URA1).